Reading from the N-terminus, the 261-residue chain is uncharacterized protein (261 aa).

Glu-46 is an active-site residue.

Belongs to the PhzF family.

This is an uncharacterized protein from Pseudomonas aeruginosa (strain ATCC 15692 / DSM 22644 / CIP 104116 / JCM 14847 / LMG 12228 / 1C / PRS 101 / PAO1).